The chain runs to 189 residues: Interferon alpha-A (189 aa).

A signal peptide spans 1–23 (MAPAWSFLLSLLLLSCNAICSLG). 2 disulfide bridges follow: C24-C122 and C52-C162.

Belongs to the alpha/beta interferon family.

It is found in the secreted. Functionally, produced by macrophages, IFN-alpha have antiviral activities. Interferon stimulates the production of two enzymes: a protein kinase and an oligoadenylate synthetase. The sequence is that of Interferon alpha-A (IFNAA) from Bos taurus (Bovine).